The sequence spans 289 residues: D-alanine aminotransferase (289 aa).

Tyrosine 31 contributes to the substrate binding site. Residue arginine 50 participates in pyridoxal 5'-phosphate binding. Substrate-binding residues include arginine 99 and histidine 101. Lysine 147 serves as the catalytic Proton acceptor. N6-(pyridoxal phosphate)lysine is present on lysine 147. Position 179 (glutamate 179) interacts with pyridoxal 5'-phosphate.

The protein belongs to the class-IV pyridoxal-phosphate-dependent aminotransferase family. In terms of assembly, homodimer. The cofactor is pyridoxal 5'-phosphate.

It carries out the reaction D-alanine + 2-oxoglutarate = D-glutamate + pyruvate. Acts on the D-isomers of alanine, leucine, aspartate, glutamate, aminobutyrate, norvaline and asparagine. The enzyme transfers an amino group from a substrate D-amino acid to the pyridoxal phosphate cofactor to form pyridoxamine and an alpha-keto acid in the first half-reaction. The second half-reaction is the reverse of the first, transferring the amino group from the pyridoxamine to a second alpha-keto acid to form the product D-amino acid via a ping-pong mechanism. This is an important process in the formation of D-alanine and D-glutamate, which are essential bacterial cell wall components. The protein is D-alanine aminotransferase (dat) of Listeria innocua serovar 6a (strain ATCC BAA-680 / CLIP 11262).